The sequence spans 426 residues: MANDSGGPGGPSPSERDRQYCELCGKMENLLRCSRCRSSFYCCKEHQRQDWKKHKLVCQGSEGALGHGVGPHQHSGPAPPAAVPPPRAGAREPRKAAARRDNASGDAAKGKVKAKPPADPAAAASPCRAAAGGQGSAVAAEAEPGKEEPPARSSLFQEKANLYPPSNTPGDALSPGGGLRPNGQTKPLPALKLALEYIVPCMNKHGICVVDDFLGKETGQQIGDEVRALHDTGKFTDGQLVSQKSDSSKDIRGDKITWIEGKEPGCETIGLLMSSMDDLIRHCNGKLGSYKINGRTKAMVACYPGNGTGYVRHVDNPNGDGRCVTCIYYLNKDWDAKVSGGILRIFPEGKAQFADIEPKFDRLLFFWSDRRNPHEVQPAYATRYAITVWYFDADERARAKVKYLTGEKGVRVELNKPSDSVGKDVF.

An N-acetylalanine modification is found at Ala2. Residues 6-20 are required for nuclear export; the sequence is GGPGGPSPSERDRQY. Ser12 is modified (phosphoserine). Residues Cys21, Cys24, Cys33, Cys36, Cys42, His46, His54, and Cys58 each coordinate Zn(2+). The MYND-type; atypical zinc-finger motif lies at 21–58; that stretch reads CELCGKMENLLRCSRCRSSFYCCKEHQRQDWKKHKLVC. Disordered regions lie at residues 65 to 129 and 160 to 184; these read LGHG…PCRA and ANLY…PNGQ. The segment covering 77–87 has biased composition (pro residues); the sequence is PAPPAAVPPPR. A compositionally biased stretch (basic and acidic residues) spans 89–103; that stretch reads GAREPRKAAARRDNA. The span at 120–129 shows a compositional bias: low complexity; that stretch reads PAAAASPCRA. Ser125 is modified (phosphoserine). 2 positions are modified to S-nitrosocysteine: Cys201 and Cys208. Positions 241 to 251 are beta(2)beta(3) 'finger-like' loop; sequence VSQKSDSSKDI. Residues 291-392 enclose the Fe2OG dioxygenase domain; the sequence is KINGRTKAMV…RYAITVWYFD (102 aa). Cys302 carries the post-translational modification S-nitrosocysteine. His313 and Asp315 together coordinate Fe cation. S-nitrosocysteine occurs at positions 323 and 326. A Fe cation-binding site is contributed by His374. Arg383 contacts 2-oxoglutarate.

As to quaternary structure, monomer. Interacts with ING4; the interaction inhibits the hydroxylation of HIF alpha proteins. Interacts with PTGES3 (via PXLE motif); thereby recruiting EGLN1 to the HSP90 pathway to facilitate HIF alpha proteins hydroxylation. Interacts with LIMD1. Found in a complex composed of LIMD1, VHL, EGLN1/PHD2, ELOB and CUL2. Interacts with EPAS1. Interacts with CBFA2T3. Interacts with HIF1A. Fe(2+) is required as a cofactor. It depends on L-ascorbate as a cofactor. In terms of processing, S-nitrosylation inhibits the enzyme activity up to 60% under aerobic conditions. Chelation of Fe(2+) has no effect on the S-nitrosylation. It is uncertain whether nitrosylation occurs on Cys-323 or Cys-326. According to PubMed:11056053, widely expressed with highest levels in skeletal muscle and heart, moderate levels in pancreas, brain (dopaminergic neurons of adult and fetal substantia nigra) and kidney, and lower levels in lung and liver. According to PubMed:12351678 widely expressed with highest levels in brain, kidney and adrenal gland. Expressed in cardiac myocytes, aortic endothelial cells and coronary artery smooth muscle. According to PubMed:12788921; expressed in adult and fetal heart, brain, liver, lung, skeletal muscle and kidney. Also expressed in placenta. Highest levels in adult heart, brain, lung and liver and fetal brain, heart spleen and skeletal muscle.

It is found in the cytoplasm. The protein resides in the nucleus. It carries out the reaction L-prolyl-[hypoxia-inducible factor alpha subunit] + 2-oxoglutarate + O2 = trans-4-hydroxy-L-prolyl-[hypoxia-inducible factor alpha subunit] + succinate + CO2. Its activity is regulated as follows. Following exposure to hypoxia, activated in HeLa cells but not in cardiovascular cells. Cellular oxygen sensor that catalyzes, under normoxic conditions, the post-translational formation of 4-hydroxyproline in hypoxia-inducible factor (HIF) alpha proteins. Hydroxylates a specific proline found in each of the oxygen-dependent degradation (ODD) domains (N-terminal, NODD, and C-terminal, CODD) of HIF1A. Also hydroxylates HIF2A. Has a preference for the CODD site for both HIF1A and HIF1B. Hydroxylated HIFs are then targeted for proteasomal degradation via the von Hippel-Lindau ubiquitination complex. Under hypoxic conditions, the hydroxylation reaction is attenuated allowing HIFs to escape degradation resulting in their translocation to the nucleus, heterodimerization with HIF1B, and increased expression of hypoxy-inducible genes. EGLN1 is the most important isozyme under normoxia and, through regulating the stability of HIF1, involved in various hypoxia-influenced processes such as angiogenesis in retinal and cardiac functionality. Target proteins are preferentially recognized via a LXXLAP motif. This chain is Egl nine homolog 1, found in Homo sapiens (Human).